Here is a 202-residue protein sequence, read N- to C-terminus: Interleukin-17D (202 aa).

A signal peptide spans 1 to 15 (MLVAGFLLALPPSWA). The interval 65 to 85 (QARNASCPAGGRPADRRFRPP) is disordered. N68 and N181 each carry an N-linked (GlcNAc...) asparagine glycan.

The protein belongs to the IL-17 family. Expressed preferentially in adipose, skeletal muscle and CNS.

Its subcellular location is the secreted. In terms of biological role, induces expression of IL6, CXCL8/IL8, and CSF2/GM-CSF from endothelial cells. The chain is Interleukin-17D (IL17D) from Homo sapiens (Human).